A 587-amino-acid chain; its full sequence is Phosphomethylpyrimidine synthase (587 aa).

The interval 1–58 is disordered; the sequence is MTPTQNEIHPKHSYSPIRKDGLEVPETEIRLDDSPSGPNEPFRIYRTRGPETNPKQGL. A compositionally biased stretch (basic and acidic residues) spans 17–33; it reads IRKDGLEVPETEIRLDD. Residues asparagine 180, methionine 209, tyrosine 238, histidine 274, 294 to 296, 335 to 338, and glutamate 374 contribute to the substrate site; these read SRG and DGLR. Histidine 378 is a Zn(2+) binding site. Substrate is bound at residue tyrosine 401. Histidine 442 is a Zn(2+) binding site. [4Fe-4S] cluster is bound by residues cysteine 522, cysteine 525, and cysteine 530.

The protein belongs to the ThiC family. [4Fe-4S] cluster serves as cofactor.

It catalyses the reaction 5-amino-1-(5-phospho-beta-D-ribosyl)imidazole + S-adenosyl-L-methionine = 4-amino-2-methyl-5-(phosphooxymethyl)pyrimidine + CO + 5'-deoxyadenosine + formate + L-methionine + 3 H(+). The protein operates within cofactor biosynthesis; thiamine diphosphate biosynthesis. Functionally, catalyzes the synthesis of the hydroxymethylpyrimidine phosphate (HMP-P) moiety of thiamine from aminoimidazole ribotide (AIR) in a radical S-adenosyl-L-methionine (SAM)-dependent reaction. The sequence is that of Phosphomethylpyrimidine synthase from Corynebacterium glutamicum (strain ATCC 13032 / DSM 20300 / JCM 1318 / BCRC 11384 / CCUG 27702 / LMG 3730 / NBRC 12168 / NCIMB 10025 / NRRL B-2784 / 534).